The sequence spans 304 residues: MELIEEIINLDEAIQGETRTEIIYTKSQTPSNIKIIVIAGNPGIESFYQEFVKVLNLSFNSKYDIYGVGHIGHCGKIENKTFSVEEQIKHKELFLEYLLKNKYGDKDRKDIKFILIGHSVGSYISLKVVSRFSEKFEFLSVVNLFPTFKNLYDGLSPFIKMVVMRESTRNGLSTFLHYIPSIVVSNVLKWILPSDESRIAVQSKINYYSALNILYMAYTETEDIKEIDDECHSVFNSRLNQLLFIYGQTDSYTPKSFYDEMKQLYPAGNIEYSSSYVPHAFVLHHSQEVALRVSEWLSLNILKN.

Ser-119 functions as the Nucleophile in the catalytic mechanism. Residues Asp-250 and His-279 each act as charge relay system in the active site.

The protein belongs to the AB hydrolase superfamily. LDAH family.

Its subcellular location is the lipid droplet. The catalysed reaction is a cholesterol ester + H2O = cholesterol + a fatty acid + H(+). Probable serine lipid hydrolase associated with lipid droplets. Has low cholesterol esterase activity. Appears to lack triglyceride lipase activity. Involved in cholesterol and triglyceride homeostasis; stimulates cellular triglyceride accumulation and cellular cholesterol release. This is Lipid droplet-associated hydrolase from Dictyostelium discoideum (Social amoeba).